Here is a 113-residue protein sequence, read N- to C-terminus: U11-theraphotoxin-Hhn1a (113 aa).

Positions 1-21 (MDTVRVAFLLVLVLAVSLGQA) are cleaved as a signal peptide. Residues 22-74 (DKDENRMEMQEKTEQGKSYLDFAENLLLQKLEELEAKLLEEDSEESRNSRQKR) constitute a propeptide that is removed on maturation. The segment covering 60–69 (LEEDSEESRN) has biased composition (basic and acidic residues). Positions 60–83 (LEEDSEESRNSRQKRCIGEGVPCD) are disordered. Cystine bridges form between Cys75-Cys90, Cys82-Cys95, and Cys89-Cys110.

The protein belongs to the neurotoxin 14 (magi-1) family. 01 (HNTX-16) subfamily. As to expression, expressed by the venom gland.

Its subcellular location is the secreted. Probable ion channel inhibitor. The protein is U11-theraphotoxin-Hhn1a of Cyriopagopus hainanus (Chinese bird spider).